The following is a 361-amino-acid chain: 3-dehydroquinate synthase (361 aa).

The protein belongs to the archaeal-type DHQ synthase family.

The enzyme catalyses 2-amino-2,3,7-trideoxy-D-lyxo-hept-6-ulosonate + NAD(+) + H2O = 3-dehydroquinate + NH4(+) + NADH + H(+). Its function is as follows. Catalyzes the oxidative deamination and cyclization of 2-amino-3,7-dideoxy-D-threo-hept-6-ulosonic acid (ADH) to yield 3-dehydroquinate (DHQ), which is fed into the canonical shikimic pathway of aromatic amino acid biosynthesis. In Methanococcus maripaludis (strain C5 / ATCC BAA-1333), this protein is 3-dehydroquinate synthase.